A 101-amino-acid chain; its full sequence is CLAVATA3/ESR (CLE)-related protein 18 (101 aa).

Residues 1 to 25 form the signal peptide; sequence MHLLKGGVVLIITLILFLITSSIVA. The tract at residues 37-58 is disordered; it reads RQIPTGPDPLHNPPQPSPKHHH. Hydroxyproline is present on residues Pro-40 and Pro-43. The span at 42–53 shows a compositional bias: pro residues; sequence GPDPLHNPPQPS. Pro-43 carries an O-linked (Ara...) hydroxyproline glycan. At Tyr-76 the chain carries Sulfotyrosine. The residue at position 84 (Pro-84) is a Hydroxyproline.

The protein belongs to the CLV3/ESR signal peptide family. Post-translationally, the tyrosine sulfation is critical for the function of the peptide. The O-glycosylation (arabinosylation) of the hydroxyproline Pro-43 enhances binding affinity of the CLE18p peptide for its receptor. As to expression, expressed in roots, leaves, siliques and seedlings.

It localises to the secreted. Its subcellular location is the extracellular space. Root growth factor that regulates the pattern of root growth and lateral root development by modulating the length and the number of cortical cells in the root apical meristem (RAM), and the anticlinal asymmetric cell divisions in lateral root initiation cells. In terms of biological role, extracellular signal peptide that regulates cell fate. Represses root apical meristem maintenance. Root growth factor that regulates the pattern of root growth and lateral root development. Regulates the transition of protophloem cells from proliferation to differentiation, thus impinging on postembryonic growth capacity of the root meristem; this signaling pathway requires CRN and CLV2. The protein is CLAVATA3/ESR (CLE)-related protein 18 of Arabidopsis thaliana (Mouse-ear cress).